The primary structure comprises 206 residues: Small ribosomal subunit protein eS1 (206 aa).

This sequence belongs to the eukaryotic ribosomal protein eS1 family.

This is Small ribosomal subunit protein eS1 from Natronomonas pharaonis (strain ATCC 35678 / DSM 2160 / CIP 103997 / JCM 8858 / NBRC 14720 / NCIMB 2260 / Gabara) (Halobacterium pharaonis).